Here is a 320-residue protein sequence, read N- to C-terminus: Ferrochelatase (320 aa).

Residues His-194 and Glu-275 each coordinate Fe cation.

This sequence belongs to the ferrochelatase family.

It localises to the cytoplasm. It carries out the reaction heme b + 2 H(+) = protoporphyrin IX + Fe(2+). It participates in porphyrin-containing compound metabolism; protoheme biosynthesis; protoheme from protoporphyrin-IX: step 1/1. Catalyzes the ferrous insertion into protoporphyrin IX. This Yersinia pestis bv. Antiqua (strain Antiqua) protein is Ferrochelatase.